A 323-amino-acid polypeptide reads, in one-letter code: Lipoyl synthase (323 aa).

7 residues coordinate [4Fe-4S] cluster: cysteine 56, cysteine 61, cysteine 67, cysteine 82, cysteine 86, cysteine 89, and serine 293. The 215-residue stretch at 68-282 (WEDREATFLI…AAEARELGFA (215 aa)) folds into the Radical SAM core domain.

This sequence belongs to the radical SAM superfamily. Lipoyl synthase family. [4Fe-4S] cluster is required as a cofactor.

The protein resides in the cytoplasm. The catalysed reaction is [[Fe-S] cluster scaffold protein carrying a second [4Fe-4S](2+) cluster] + N(6)-octanoyl-L-lysyl-[protein] + 2 oxidized [2Fe-2S]-[ferredoxin] + 2 S-adenosyl-L-methionine + 4 H(+) = [[Fe-S] cluster scaffold protein] + N(6)-[(R)-dihydrolipoyl]-L-lysyl-[protein] + 4 Fe(3+) + 2 hydrogen sulfide + 2 5'-deoxyadenosine + 2 L-methionine + 2 reduced [2Fe-2S]-[ferredoxin]. It functions in the pathway protein modification; protein lipoylation via endogenous pathway; protein N(6)-(lipoyl)lysine from octanoyl-[acyl-carrier-protein]: step 2/2. Catalyzes the radical-mediated insertion of two sulfur atoms into the C-6 and C-8 positions of the octanoyl moiety bound to the lipoyl domains of lipoate-dependent enzymes, thereby converting the octanoylated domains into lipoylated derivatives. In Acidothermus cellulolyticus (strain ATCC 43068 / DSM 8971 / 11B), this protein is Lipoyl synthase.